The primary structure comprises 237 residues: tRNA (guanine-N(7)-)-methyltransferase (237 aa).

Residues glutamate 67, glutamate 92, aspartate 119, and aspartate 142 each contribute to the S-adenosyl-L-methionine site. Aspartate 142 is an active-site residue. Residues lysine 146, aspartate 178, and 215–218 (TKFE) each bind substrate.

It belongs to the class I-like SAM-binding methyltransferase superfamily. TrmB family.

The catalysed reaction is guanosine(46) in tRNA + S-adenosyl-L-methionine = N(7)-methylguanosine(46) in tRNA + S-adenosyl-L-homocysteine. It functions in the pathway tRNA modification; N(7)-methylguanine-tRNA biosynthesis. Its function is as follows. Catalyzes the formation of N(7)-methylguanine at position 46 (m7G46) in tRNA. The protein is tRNA (guanine-N(7)-)-methyltransferase of Aeromonas hydrophila subsp. hydrophila (strain ATCC 7966 / DSM 30187 / BCRC 13018 / CCUG 14551 / JCM 1027 / KCTC 2358 / NCIMB 9240 / NCTC 8049).